Here is a 461-residue protein sequence, read N- to C-terminus: L-seryl-tRNA(Sec) selenium transferase (461 aa).

At lysine 294 the chain carries N6-(pyridoxal phosphate)lysine.

It belongs to the SelA family. Pyridoxal 5'-phosphate is required as a cofactor.

It localises to the cytoplasm. The catalysed reaction is L-seryl-tRNA(Sec) + selenophosphate + H(+) = L-selenocysteinyl-tRNA(Sec) + phosphate. Its pathway is aminoacyl-tRNA biosynthesis; selenocysteinyl-tRNA(Sec) biosynthesis; selenocysteinyl-tRNA(Sec) from L-seryl-tRNA(Sec) (bacterial route): step 1/1. Functionally, converts seryl-tRNA(Sec) to selenocysteinyl-tRNA(Sec) required for selenoprotein biosynthesis. The chain is L-seryl-tRNA(Sec) selenium transferase from Actinobacillus pleuropneumoniae serotype 7 (strain AP76).